The sequence spans 631 residues: Glutamyl-tRNA(Gln) amidotransferase subunit E (631 aa).

The protein belongs to the GatB/GatE family. GatE subfamily. As to quaternary structure, heterodimer of GatD and GatE.

It carries out the reaction L-glutamyl-tRNA(Gln) + L-glutamine + ATP + H2O = L-glutaminyl-tRNA(Gln) + L-glutamate + ADP + phosphate + H(+). In terms of biological role, allows the formation of correctly charged Gln-tRNA(Gln) through the transamidation of misacylated Glu-tRNA(Gln) in organisms which lack glutaminyl-tRNA synthetase. The reaction takes place in the presence of glutamine and ATP through an activated gamma-phospho-Glu-tRNA(Gln). The GatDE system is specific for glutamate and does not act on aspartate. The protein is Glutamyl-tRNA(Gln) amidotransferase subunit E of Methanococcus maripaludis (strain C5 / ATCC BAA-1333).